We begin with the raw amino-acid sequence, 863 residues long: Paramyosin (863 aa).

Residues 1 to 26 (MSESHVKISRTIIRGTSPSTVRLESP) form a nonhelical region region. The stretch at 27–836 (VRELEDLLDL…ERTITIKRTI (810 aa)) forms a coiled coil. Positions 837–863 (GGPGSRAVSVVREINSVSRGNRATSIM) are nonhelical region.

This sequence belongs to the paramyosin family. In terms of assembly, homodimer.

The protein resides in the cytoplasm. Its subcellular location is the myofibril. In terms of biological role, paramyosin is a major structural component of many thick filaments isolated from invertebrate muscles. The sequence is that of Paramyosin from Echinococcus granulosus (Hydatid tapeworm).